The primary structure comprises 297 residues: MPETTQDTCASAKDSPFFIKNLLNSDSKPSKPKPILAPTKAGLDGSFSLSQVGEINFPRFELPTQRFALPAYLERASAWWYPYTLSASAHLHRTEAAQKARDSSPTTGTDRDSPELVLKSDPDAKDDEDDNKSGDEIVLEEGDTEDGKKEGGIDDWKKSDDGADKKPCRKKKTRTVFSRSQVFQLESTFDMKRYLSSSERAGLAASLHLTETQVKIWFQNRRNKWKRQLAAELEAANLSHAAAQRIVRVPILYHENSASESTNTAGNVPVSQPLLTFPHPVYYSHPIVTSVPLLRPV.

Disordered stretches follow at residues 24-43 (NSDS…KAGL) and 96-172 (AAQK…RKKK). Composition is skewed to basic and acidic residues over residues 109 to 123 (TDRD…SDPD) and 145 to 166 (EDGK…ADKK). The segment at residues 170-229 (KKKTRTVFSRSQVFQLESTFDMKRYLSSSERAGLAASLHLTETQVKIWFQNRRNKWKRQL) is a DNA-binding region (homeobox).

This sequence belongs to the HMX homeobox family. In terms of tissue distribution, expressed in the ear placode and vesicle and in cells forming the vestibulo-acoustic ganglion. Also expressed in the lateral line.

It localises to the nucleus. In terms of biological role, transcription factor involved in specification of neuronal cell types and which is required for inner ear and hypothalamus development. Binds to the 5'-CAAGTG-3' core sequence. In Danio rerio (Zebrafish), this protein is Homeobox protein HMX3 (hmx3).